The chain runs to 354 residues: Deubiquitination-protection protein dph1 (354 aa).

A Ubiquitin-like domain is found at 1-78 (MTNISLTIKA…SIHLVKTLGQ (78 aa)). The UBA domain maps to 309 to 353 (PPEERYAEQLSQLNEMGFVDFERNVQALRRSGGNVQGAIESLLSD).

Protects ubiquitin chains against dissambly by deubiquitinating enzymes thereby promoting protein degradation. This Schizosaccharomyces pombe (strain 972 / ATCC 24843) (Fission yeast) protein is Deubiquitination-protection protein dph1 (dph1).